The sequence spans 529 residues: Protein FLOURY ENDOSPERM 6, chloroplastic (529 aa).

Disordered regions lie at residues 1–22, 39–77, and 166–275; these read MLPLLLPLPVTPPPPLPSPTLT, AAPHHHHHHRRRRVYRRQRAAPTQTRAPRRTLSASNAAR, and QGAV…HNKS. A chloroplast-targeting transit peptide spans 1–71; that stretch reads MLPLLLPLPV…QTRAPRRTLS (71 aa). Over residues 9–18 the composition is skewed to pro residues; the sequence is PVTPPPPLPS. Over residues 41–57 the composition is skewed to basic residues; that stretch reads PHHHHHHRRRRVYRRQR. Positions 400 to 452 form a coiled coil; sequence VMQAQEELRSIRAKIAVLEGKMALEIIEKNKIIEEKQRRLDEAEKALSELRTV.

As to quaternary structure, interacts with SKIPA. Interacts with ISA1. Expressed in leaves, stems and panicles. Expressed at lower levels in roots and developing seeds.

The protein localises to the plastid. Its subcellular location is the chloroplast. Involved in compound starch granule formation and starch synthesis in endosperm. May act as a regulatory scaffolding protein and affect starch synthesis and compound starch granule formation through direct interaction with isoamylase 1 (ISA1). Binds starch, amylopectin and amylose through its C-terminal carbohydrate-binding domain (CBM) in vitro. The chain is Protein FLOURY ENDOSPERM 6, chloroplastic from Oryza sativa subsp. japonica (Rice).